The following is a 474-amino-acid chain: MTKKLLIKTWGCQMNEYDSSKMADLLGAANGYELTEEPTEADVLLLNTCSIREKAQEKVFHQLGRWKNLKDKKPDLVIGVGGCVATQEGDHIRQRAPYVDVIFGPQTLHRLPEMIRQSQSNEKPVMDISFPEIEKFDNLPEPKAEGATAFVSIMEGCSKYCTYCVVPYTRGEEVSRPLDDVLFEIAQLAEQGVREVNLLGQNVNAYRGPMHDGDICTFAELLRMVASIDGIDRLRFTTSHPLEFGDDIIAVYEDTPELVSFLHLPVQSGSDRILTMMKRPHTAIEYKSIIRKLRKARPDIQISSDFIVGFPGETAKDFQDTMKLIKDVDFDMSFSFIFSARPGTPAADYPCDIPEQEKKDRLAELQQQVNSQAMRYSRLMLDTEQRVLVEGPSKKNLMELRARTENNRVVNFEGSADLIGQFVDVKITDVFANSLRGELVRTEKDMGLRVVMTPAEMMEKTRREDDLGVGTFTP.

In terms of domain architecture, MTTase N-terminal spans 3-120 (KKLLIKTWGC…LPEMIRQSQS (118 aa)). Residues C12, C49, C83, C157, C161, and C164 each coordinate [4Fe-4S] cluster. Residues 143–375 (KAEGATAFVS…QQQVNSQAMR (233 aa)) enclose the Radical SAM core domain. The 64-residue stretch at 378 to 441 (RLMLDTEQRV…ANSLRGELVR (64 aa)) folds into the TRAM domain.

This sequence belongs to the methylthiotransferase family. MiaB subfamily. Monomer. Requires [4Fe-4S] cluster as cofactor.

It is found in the cytoplasm. The enzyme catalyses N(6)-dimethylallyladenosine(37) in tRNA + (sulfur carrier)-SH + AH2 + 2 S-adenosyl-L-methionine = 2-methylsulfanyl-N(6)-dimethylallyladenosine(37) in tRNA + (sulfur carrier)-H + 5'-deoxyadenosine + L-methionine + A + S-adenosyl-L-homocysteine + 2 H(+). Catalyzes the methylthiolation of N6-(dimethylallyl)adenosine (i(6)A), leading to the formation of 2-methylthio-N6-(dimethylallyl)adenosine (ms(2)i(6)A) at position 37 in tRNAs that read codons beginning with uridine. This Aliivibrio fischeri (strain ATCC 700601 / ES114) (Vibrio fischeri) protein is tRNA-2-methylthio-N(6)-dimethylallyladenosine synthase.